The sequence spans 438 residues: Protein DJ-1 homolog B (438 aa).

Residues 1-45 (MASSSLCHRYFNKITVTPFFNTKKLHHYSPRRISLRVNRRSFSIS) constitute a chloroplast transit peptide. PfpI endopeptidase domains follow at residues 53–220 (KKVL…EQLL) and 258–424 (PQIL…EKFY).

The protein belongs to the peptidase C56 family. Homodimer.

The protein resides in the plastid. It is found in the chloroplast. In terms of biological role, may be involved in oxidative stress response. This Arabidopsis thaliana (Mouse-ear cress) protein is Protein DJ-1 homolog B (DJ1B).